Here is a 94-residue protein sequence, read N- to C-terminus: Integration host factor subunit beta (94 aa).

Belongs to the bacterial histone-like protein family. As to quaternary structure, heterodimer of an alpha and a beta chain.

This protein is one of the two subunits of integration host factor, a specific DNA-binding protein that functions in genetic recombination as well as in transcriptional and translational control. In Serratia proteamaculans (strain 568), this protein is Integration host factor subunit beta.